The chain runs to 456 residues: Exodeoxyribonuclease 7 large subunit (456 aa).

Belongs to the XseA family. As to quaternary structure, heterooligomer composed of large and small subunits.

It localises to the cytoplasm. It carries out the reaction Exonucleolytic cleavage in either 5'- to 3'- or 3'- to 5'-direction to yield nucleoside 5'-phosphates.. In terms of biological role, bidirectionally degrades single-stranded DNA into large acid-insoluble oligonucleotides, which are then degraded further into small acid-soluble oligonucleotides. The sequence is that of Exodeoxyribonuclease 7 large subunit from Lactobacillus delbrueckii subsp. bulgaricus (strain ATCC BAA-365 / Lb-18).